The following is a 229-amino-acid chain: Large ribosomal subunit protein uL1 (229 aa).

Belongs to the universal ribosomal protein uL1 family. As to quaternary structure, part of the 50S ribosomal subunit.

Functionally, binds directly to 23S rRNA. The L1 stalk is quite mobile in the ribosome, and is involved in E site tRNA release. In terms of biological role, protein L1 is also a translational repressor protein, it controls the translation of the L11 operon by binding to its mRNA. The sequence is that of Large ribosomal subunit protein uL1 from Enterococcus faecalis (strain ATCC 700802 / V583).